The following is a 270-amino-acid chain: Phosphatidylglycerol--prolipoprotein diacylglyceryl transferase (270 aa).

The next 7 membrane-spanning stretches (helical) occupy residues Val-14–Leu-34, Tyr-60–Tyr-80, Phe-103–Ile-123, Leu-133–Ile-153, Pro-181–Tyr-201, Gly-209–Phe-229, and Gly-235–Phe-255. Arg-152 is a binding site for a 1,2-diacyl-sn-glycero-3-phospho-(1'-sn-glycerol).

The protein belongs to the Lgt family.

Its subcellular location is the cell inner membrane. It carries out the reaction L-cysteinyl-[prolipoprotein] + a 1,2-diacyl-sn-glycero-3-phospho-(1'-sn-glycerol) = an S-1,2-diacyl-sn-glyceryl-L-cysteinyl-[prolipoprotein] + sn-glycerol 1-phosphate + H(+). Its pathway is protein modification; lipoprotein biosynthesis (diacylglyceryl transfer). Catalyzes the transfer of the diacylglyceryl group from phosphatidylglycerol to the sulfhydryl group of the N-terminal cysteine of a prolipoprotein, the first step in the formation of mature lipoproteins. The protein is Phosphatidylglycerol--prolipoprotein diacylglyceryl transferase of Campylobacter curvus (strain 525.92).